The sequence spans 129 residues: Small ribosomal subunit protein uS11 (129 aa).

Belongs to the universal ribosomal protein uS11 family. As to quaternary structure, part of the 30S ribosomal subunit. Interacts with proteins S7 and S18. Binds to IF-3.

Functionally, located on the platform of the 30S subunit, it bridges several disparate RNA helices of the 16S rRNA. Forms part of the Shine-Dalgarno cleft in the 70S ribosome. This is Small ribosomal subunit protein uS11 from Listeria innocua serovar 6a (strain ATCC BAA-680 / CLIP 11262).